The following is a 161-amino-acid chain: PTS system glucose-specific EIIA component (161 aa).

A PTS EIIA type-1 domain is found at 31–135 (DPVFSKKIVG…SILTPVVISN (105 aa)). 2 residues coordinate Zn(2+): H68 and H83. H83 (tele-phosphohistidine intermediate; for EIIA activity) is an active-site residue. A Phosphohistidine; by HPr modification is found at H83.

Zn(2+) serves as cofactor.

It localises to the cytoplasm. The phosphoenolpyruvate-dependent sugar phosphotransferase system (sugar PTS), a major carbohydrate active transport system, catalyzes the phosphorylation of incoming sugar substrates concomitantly with their translocation across the cell membrane. The enzyme II complex composed of PtsG and Crr is involved in glucose transport. The sequence is that of PTS system glucose-specific EIIA component (crr) from Buchnera aphidicola subsp. Acyrthosiphon pisum (strain APS) (Acyrthosiphon pisum symbiotic bacterium).